Here is a 270-residue protein sequence, read N- to C-terminus: MAAASSGEKEKERPGGGLGAAGGNSTRERLLSALEDLEVLSRELIEMLAISRNQKLLQSGEENQVLELLIHRDGEFQELMKLALNQGKIHHEMQVLEKEVEKRDSDIQQLQKQLKEAEQILATAVYQAKEKLKSIEKARKGAISSEEIIKYAHRISASNAVCAPLTWVPGDPRRPYPTDLEMRSGLLGQMNNPSTNGVNGHLPGDALAAGRLPDVLAPQYPWQSNDMAMNMLPPNHSHDFLLEPPGHNKENEDDVEVMSTDSSSSSSDSD.

The tract at residues 1-25 (MAAASSGEKEKERPGGGLGAAGGNS) is disordered. Position 2 is an N-acetylalanine (Ala2). Coiled coils occupy residues 24–48 (NSTR…IEML) and 90–131 (HHEM…AKEK). At Ser32 the chain carries Phosphoserine. The disordered stretch occupies residues 231–270 (MLPPNHSHDFLLEPPGHNKENEDDVEVMSTDSSSSSSDSD). Positions 236–250 (HSHDFLLEPPGHNKE) are enriched in basic and acidic residues. The segment covering 259–270 (STDSSSSSSDSD) has biased composition (low complexity).

It belongs to the Mediator complex subunit 4 family. Component of the Mediator complex, which is composed of MED1, MED4, MED6, MED7, MED8, MED9, MED10, MED11, MED12, MED13, MED13L, MED14, MED15, MED16, MED17, MED18, MED19, MED20, MED21, MED22, MED23, MED24, MED25, MED26, MED27, MED29, MED30, MED31, CCNC, CDK8 and CDC2L6/CDK11. The MED12, MED13, CCNC and CDK8 subunits form a distinct module termed the CDK8 module. Mediator containing the CDK8 module is less active than Mediator lacking this module in supporting transcriptional activation. Individual preparations of the Mediator complex lacking one or more distinct subunits have been variously termed ARC, CRSP, DRIP, PC2, SMCC and TRAP.

Its subcellular location is the nucleus. In terms of biological role, component of the Mediator complex, a coactivator involved in the regulated transcription of nearly all RNA polymerase II-dependent genes. Mediator functions as a bridge to convey information from gene-specific regulatory proteins to the basal RNA polymerase II transcription machinery. Mediator is recruited to promoters by direct interactions with regulatory proteins and serves as a scaffold for the assembly of a functional preinitiation complex with RNA polymerase II and the general transcription factors. This Bos taurus (Bovine) protein is Mediator of RNA polymerase II transcription subunit 4 (MED4).